We begin with the raw amino-acid sequence, 1008 residues long: Collagen, type I, alpha 1a (1008 aa).

Residues 1–21 (SPAMPVPGPMGPMGPRGPPGS) show a composition bias toward pro residues. Residues 1–920 (SPAMPVPGPM…PQEKAPDPFR (920 aa)) are disordered. The segment covering 39–53 (NGEDGESGKPGRGGE) has biased composition (basic and acidic residues). A compositionally biased stretch (low complexity) spans 92 to 117 (TPGAMGPRGAAGAAGARGNDGAAGAA). The segment covering 119–132 (PPGPTGPAGPPGFP) has biased composition (pro residues). Over residues 133-151 (GGPGAKGDAGAQGGRGPEG) the composition is skewed to gly residues. Low complexity-rich tracts occupy residues 152–195 (PAGA…AGAP) and 204–230 (SGPQ…APGV). Positions 253 to 265 (GARGGPGGRGFPG) are enriched in gly residues. Composition is skewed to low complexity over residues 339–354 (VGAR…PGPK) and 410–422 (LPGE…PAGA). Basic and acidic residues predominate over residues 423–435 (RGDRGFPGERGAK). Composition is skewed to low complexity over residues 437–456 (DAGA…QGMP), 489–524 (RGLT…ARGA), and 537–573 (AGFA…AGPT). Residues 604-617 (PPGPSGNPGPPGPA) show a composition bias toward pro residues. Low complexity predominate over residues 634 to 661 (PAGRPGELGAAGPPGPAGEKGSPGSEGA). Gly residues predominate over residues 696-709 (GEAGGPSGPGGERG). Over residues 717–735 (PGLAGAPGEPGREGSPGNE) the composition is skewed to low complexity. A compositionally biased stretch (pro residues) spans 761–771 (APGPPGAPGPV). Low complexity predominate over residues 785–806 (PAGPAGSAGPSGPRGPAGAPGL). Residues 807–821 (RGDKGESGEAGERRG) are compositionally biased toward basic and acidic residues. Positions 832-868 (SGSSGEQGPAGAAGPAGPRGPAGSAGSPGKDGMSGLP) are enriched in low complexity. Over residues 884-896 (AGPPGPPGPPGAP) the composition is skewed to pro residues. In terms of domain architecture, Fibrillar collagen NC1 spans 978-1008 (TSRLPLLDLAPMDVGAPDQEFGLEVGPVCFL).

This sequence belongs to the fibrillar collagen family.

It localises to the secreted. The protein localises to the extracellular space. Its subcellular location is the extracellular matrix. The protein is Collagen, type I, alpha 1a of Epinephelus aeneus (White grouper).